A 70-amino-acid chain; its full sequence is Conotoxin AbVIB (70 aa).

A signal peptide spans 1–17 (VIIIAVLFLTACQLTTA). Positions 18 to 41 (ETSSRGKQKHRALRSTDKNSKLTR) are excised as a propeptide. Residues 20 to 41 (SSRGKQKHRALRSTDKNSKLTR) are disordered. 3 cysteine pairs are disulfide-bonded: cysteine 43–cysteine 57, cysteine 50–cysteine 61, and cysteine 56–cysteine 68.

It belongs to the conotoxin O1 superfamily. Expressed by the venom duct.

It localises to the secreted. The sequence is that of Conotoxin AbVIB from Conus abbreviatus (Abbreviated cone).